A 229-amino-acid chain; its full sequence is PKHD-type hydroxylase BRADO4652 (229 aa).

One can recognise a Fe2OG dioxygenase domain in the interval 78–180; sequence QIFPPLFNRY…RVASFFWMQS (103 aa). Fe cation-binding residues include histidine 98, aspartate 100, and histidine 161. 2-oxoglutarate is bound at residue arginine 171.

Fe(2+) serves as cofactor. The cofactor is L-ascorbate.

In Bradyrhizobium sp. (strain ORS 278), this protein is PKHD-type hydroxylase BRADO4652.